The primary structure comprises 436 residues: 3-ketoacyl-CoA thiolase (436 aa).

Residue Cys-99 is the Acyl-thioester intermediate of the active site. Catalysis depends on proton acceptor residues His-392 and Cys-422.

The protein belongs to the thiolase-like superfamily. Thiolase family. Heterotetramer of two alpha chains (FadJ) and two beta chains (FadI).

It is found in the cytoplasm. The enzyme catalyses an acyl-CoA + acetyl-CoA = a 3-oxoacyl-CoA + CoA. The protein operates within lipid metabolism; fatty acid beta-oxidation. In terms of biological role, catalyzes the final step of fatty acid oxidation in which acetyl-CoA is released and the CoA ester of a fatty acid two carbons shorter is formed. This chain is 3-ketoacyl-CoA thiolase, found in Yersinia pseudotuberculosis serotype O:1b (strain IP 31758).